The chain runs to 413 residues: MYTLDDIKKEDPEIASAITDEFERQNSHIELIASENWVSPAVMSAMGSILTNKYAEGYPGRRYYGGCECVDEVEELARERAKELFGAEYVNVQPHSGAQANMAVQFAILKPGDTIMGMNLDHGGHLTHGSPVNFSGSYFHVVPYGVNDEGFIDYDKVEEIALECKPKMIIAGASAYARTIDFKRFREIADKVDAVLMVDMAHIAGLVAAGLHPSPIPYAHVTTTTTHKTLRGPRGGMILCSQEMQDKYNFNKAIFPGIQGGPLMHVIAAKAVCFKEALQPEFKEYQKQIVKNAQALCKGLQSRGIKIVSDGTDNHLMLVDLTPFGLTGKSIEKLLDAAHITANKNTIPNDPQKPFVTSGIRLGTPAATSRGLKEDDFDKVAEAIAMIIKEGESAVEPAKAIIKTLTDKYPLAF.

(6S)-5,6,7,8-tetrahydrofolate contacts are provided by residues Leu-120 and 124–126 (GHL). At Lys-228 the chain carries N6-(pyridoxal phosphate)lysine.

The protein belongs to the SHMT family. As to quaternary structure, homodimer. The cofactor is pyridoxal 5'-phosphate.

It localises to the cytoplasm. It carries out the reaction (6R)-5,10-methylene-5,6,7,8-tetrahydrofolate + glycine + H2O = (6S)-5,6,7,8-tetrahydrofolate + L-serine. It participates in one-carbon metabolism; tetrahydrofolate interconversion. It functions in the pathway amino-acid biosynthesis; glycine biosynthesis; glycine from L-serine: step 1/1. Its function is as follows. Catalyzes the reversible interconversion of serine and glycine with tetrahydrofolate (THF) serving as the one-carbon carrier. This reaction serves as the major source of one-carbon groups required for the biosynthesis of purines, thymidylate, methionine, and other important biomolecules. Also exhibits THF-independent aldolase activity toward beta-hydroxyamino acids, producing glycine and aldehydes, via a retro-aldol mechanism. The polypeptide is Serine hydroxymethyltransferase (Agathobacter rectalis (strain ATCC 33656 / DSM 3377 / JCM 17463 / KCTC 5835 / VPI 0990) (Eubacterium rectale)).